A 655-amino-acid chain; its full sequence is Polycyclic ketone monooxygenase (655 aa).

Residues G89, D113, A114, T121, W124, C132, D133, Y139, and V183 each contribute to the FAD site. 5 residues coordinate NADPH: T277, T280, T301, K425, and V452. C424 and C596 are disulfide-bonded. Positions 492 and 541 each coordinate FAD. Y600 is an NADPH binding site.

Belongs to the FAD-binding monooxygenase family. It depends on FAD as a cofactor.

Its function is as follows. Polycyclic ketone monooxygenase (PockeMO) that displays excellent enantioselectivity, acts on various ketones, and is particularly active on polycyclic molecules. Breaks C-C bonds through the insertion of a single oxygen atom adjacent to a carbonyl moiety, yielding esters or lactones from ketones. PockeMO is able to convert linear ketones (including cyclohexane and to a lesser extend 4-octanone), cyclic ketones (including cyclohexanone and cyclooctanone), bicyclic ketones and polycyclic ketones (steroids). Performs oxidation of the keto functionalities at both the A and D rings of steroids. Particularly, oxidizes the A ring of stanolone or pregnenolone. Selectively oxidizes the D ring of androstenedione or androstadienedione, steroids with keto groups in both the A and D rings, to yield the pharmaceutically relevant testo(lo)lactone. This is Polycyclic ketone monooxygenase from Thermothelomyces thermophilus (strain ATCC 42464 / BCRC 31852 / DSM 1799) (Sporotrichum thermophile).